The sequence spans 398 residues: 4-hydroxy-3-methylbut-2-enyl diphosphate reductase (398 aa).

C66 provides a ligand contact to [4Fe-4S] cluster. H96 lines the (2E)-4-hydroxy-3-methylbut-2-enyl diphosphate pocket. H96 contributes to the dimethylallyl diphosphate binding site. H96 contributes to the isopentenyl diphosphate binding site. C157 serves as a coordination point for [4Fe-4S] cluster. Position 185 (H185) interacts with (2E)-4-hydroxy-3-methylbut-2-enyl diphosphate. Position 185 (H185) interacts with dimethylallyl diphosphate. Residue H185 coordinates isopentenyl diphosphate. Residue E187 is the Proton donor of the active site. T250 contacts (2E)-4-hydroxy-3-methylbut-2-enyl diphosphate. Position 288 (C288) interacts with [4Fe-4S] cluster. 4 residues coordinate (2E)-4-hydroxy-3-methylbut-2-enyl diphosphate: S317, S318, N319, and S380. Dimethylallyl diphosphate contacts are provided by S317, S318, N319, and S380. The isopentenyl diphosphate site is built by S317, S318, N319, and S380.

This sequence belongs to the IspH family. The cofactor is [4Fe-4S] cluster.

It catalyses the reaction isopentenyl diphosphate + 2 oxidized [2Fe-2S]-[ferredoxin] + H2O = (2E)-4-hydroxy-3-methylbut-2-enyl diphosphate + 2 reduced [2Fe-2S]-[ferredoxin] + 2 H(+). The catalysed reaction is dimethylallyl diphosphate + 2 oxidized [2Fe-2S]-[ferredoxin] + H2O = (2E)-4-hydroxy-3-methylbut-2-enyl diphosphate + 2 reduced [2Fe-2S]-[ferredoxin] + 2 H(+). It functions in the pathway isoprenoid biosynthesis; dimethylallyl diphosphate biosynthesis; dimethylallyl diphosphate from (2E)-4-hydroxy-3-methylbutenyl diphosphate: step 1/1. It participates in isoprenoid biosynthesis; isopentenyl diphosphate biosynthesis via DXP pathway; isopentenyl diphosphate from 1-deoxy-D-xylulose 5-phosphate: step 6/6. Catalyzes the conversion of 1-hydroxy-2-methyl-2-(E)-butenyl 4-diphosphate (HMBPP) into a mixture of isopentenyl diphosphate (IPP) and dimethylallyl diphosphate (DMAPP). Acts in the terminal step of the DOXP/MEP pathway for isoprenoid precursor biosynthesis. The polypeptide is 4-hydroxy-3-methylbut-2-enyl diphosphate reductase (Prochlorococcus marinus (strain AS9601)).